Reading from the N-terminus, the 379-residue chain is UDP-4-amino-4-deoxy-L-arabinose--oxoglutarate aminotransferase (379 aa).

At lysine 182 the chain carries N6-(pyridoxal phosphate)lysine.

This sequence belongs to the DegT/DnrJ/EryC1 family. ArnB subfamily. Homodimer. Pyridoxal 5'-phosphate serves as cofactor.

It carries out the reaction UDP-4-amino-4-deoxy-beta-L-arabinose + 2-oxoglutarate = UDP-beta-L-threo-pentopyranos-4-ulose + L-glutamate. The protein operates within nucleotide-sugar biosynthesis; UDP-4-deoxy-4-formamido-beta-L-arabinose biosynthesis; UDP-4-deoxy-4-formamido-beta-L-arabinose from UDP-alpha-D-glucuronate: step 2/3. Its pathway is bacterial outer membrane biogenesis; lipopolysaccharide biosynthesis. Its function is as follows. Catalyzes the conversion of UDP-4-keto-arabinose (UDP-Ara4O) to UDP-4-amino-4-deoxy-L-arabinose (UDP-L-Ara4N). The modified arabinose is attached to lipid A and is required for resistance to polymyxin and cationic antimicrobial peptides. This Escherichia fergusonii (strain ATCC 35469 / DSM 13698 / CCUG 18766 / IAM 14443 / JCM 21226 / LMG 7866 / NBRC 102419 / NCTC 12128 / CDC 0568-73) protein is UDP-4-amino-4-deoxy-L-arabinose--oxoglutarate aminotransferase.